Here is a 426-residue protein sequence, read N- to C-terminus: Protein trichome birefringence-like 19 (426 aa).

A helical; Signal-anchor for type II membrane protein transmembrane segment spans residues 15–35 (LLIAVTIATSLLTIIPLLYPL). Positions 142-144 (GDS) match the GDS motif motif. Positions 388-402 (DCVHWCLPGPIDNLN) match the DCXHWCLPGXXDXWN motif motif.

Belongs to the PC-esterase family. TBL subfamily.

The protein resides in the membrane. In terms of biological role, may act as a bridging protein that binds pectin and other cell wall polysaccharides. Probably involved in maintaining esterification of pectins. May be involved in the specific O-acetylation of cell wall polymers. This chain is Protein trichome birefringence-like 19 (TBL19), found in Arabidopsis thaliana (Mouse-ear cress).